The following is a 146-amino-acid chain: Leghemoglobin Lb120-34 (146 aa).

Residues 2-146 (GFTEKQEALV…LASAIKKAMN (145 aa)) enclose the Globin domain. 2 positions are modified to nitrated tyrosine: Tyr-24 and Tyr-29. Ser-44 lines the heme b pocket. Residue Ser-44 is modified to Phosphoserine. O2 is bound at residue His-61. 3 residues coordinate heme b: Lys-64, His-93, and Lys-96. Nitrated tyrosine is present on Tyr-134.

Belongs to the plant globin family. As to quaternary structure, monomer. Nitrated in effective nodules and particularly in hypoxic conditions; this mechanism may play a protective role in the symbiosis by buffering toxic peroxynitrite NO(2)(-). Nitration level decrease during nodule senescence. Post-translationally, phosphorylation at Ser-44 disrupts the molecular environment of its porphyrin ring oxygen binding pocket, thus leading to a reduced oxygen consumption and to the delivery of oxygen O(2) to symbiosomes. As to expression, root nodules.

The protein resides in the cytoplasm. Its subcellular location is the cytosol. It is found in the nucleus. Functionally, leghemoglobin that reversibly binds oxygen O(2) through a pentacoordinated heme iron. In root nodules, facilitates the diffusion of oxygen to the bacteroids while preventing the bacterial nitrogenase from being inactivated by buffering dioxygen, nitric oxide and carbon monoxide, and promoting the formation of reactive oxygen species (ROS, e.g. H(2)O(2)). This role is essential for symbiotic nitrogen fixation (SNF). This chain is Leghemoglobin Lb120-34, found in Pisum sativum (Garden pea).